A 165-amino-acid chain; its full sequence is Cyclic pyranopterin monophosphate synthase (165 aa).

Substrate is bound by residues 83-85 (FCH) and 120-121 (ME). Aspartate 135 is a catalytic residue.

Belongs to the MoaC family. As to quaternary structure, homohexamer; trimer of dimers.

It carries out the reaction (8S)-3',8-cyclo-7,8-dihydroguanosine 5'-triphosphate = cyclic pyranopterin phosphate + diphosphate. Its pathway is cofactor biosynthesis; molybdopterin biosynthesis. Functionally, catalyzes the conversion of (8S)-3',8-cyclo-7,8-dihydroguanosine 5'-triphosphate to cyclic pyranopterin monophosphate (cPMP). The sequence is that of Cyclic pyranopterin monophosphate synthase from Xanthomonas oryzae pv. oryzae (strain MAFF 311018).